Reading from the N-terminus, the 236-residue chain is Pyridoxal phosphate homeostasis protein (236 aa).

Lys-36 carries the N6-(pyridoxal phosphate)lysine modification.

The protein belongs to the pyridoxal phosphate-binding protein YggS/PROSC family.

Its function is as follows. Pyridoxal 5'-phosphate (PLP)-binding protein, which is involved in PLP homeostasis. The sequence is that of Pyridoxal phosphate homeostasis protein from Vibrio cholerae serotype O1 (strain ATCC 39315 / El Tor Inaba N16961).